The chain runs to 481 residues: Ras-GEF domain-containing family member 1A (481 aa).

An N-terminal Ras-GEF domain is found at 41–170; the sequence is QDGHLISGSL…AIAQMTQSLL (130 aa). Residues 214–461 enclose the Ras-GEF domain; that stretch reads DPLVLAQQLT…FVASFESEGP (248 aa).

Detected in brain and spinal cord. Highly expressed in a number of intrahepatic cholangiocarcinoma tissue biopsies.

Its function is as follows. Guanine nucleotide exchange factor (GEF) with specificity for RAP2A, KRAS, HRAS, and NRAS (in vitro). Plays a role in cell migration. This chain is Ras-GEF domain-containing family member 1A (RASGEF1A), found in Homo sapiens (Human).